A 316-amino-acid chain; its full sequence is Cytochrome c biogenesis protein CcsA (316 aa).

The next 8 membrane-spanning stretches (helical) occupy residues 12 to 32 (HISLSIILIVITIFLMNLLVY), 44 to 64 (GMVASFLCITGLLVIRWIYSG), 71 to 91 (LYESLMFLSWSFSIFYMIPYF), 98 to 118 (LNVLTAPGTIFTQGFATSGVL), 145 to 165 (LSYAALLCGSLLSVALLVILF), 222 to 242 (VISLGFLFLTIGILSGAVWAN), 256 to 270 (TWAFITWTIFAIYLH), and 283 to 303 (AIVASIGFFIIWICYFGVNLL).

It belongs to the CcmF/CycK/Ccl1/NrfE/CcsA family. In terms of assembly, may interact with Ccs1.

The protein localises to the plastid. It is found in the chloroplast thylakoid membrane. Required during biogenesis of c-type cytochromes (cytochrome c6 and cytochrome f) at the step of heme attachment. The chain is Cytochrome c biogenesis protein CcsA from Ranunculus macranthus (Large buttercup).